Reading from the N-terminus, the 736-residue chain is Phosphoribosylformylglycinamidine synthase subunit PurL (736 aa).

H49 is a catalytic residue. 2 residues coordinate ATP: Y52 and K91. E93 is a Mg(2+) binding site. Residues 94-97 (SHNH) and R116 each bind substrate. The active-site Proton acceptor is the H95. D117 contacts Mg(2+). Q240 provides a ligand contact to substrate. D268 contributes to the Mg(2+) binding site. 312–314 (ESQ) contacts substrate. 2 residues coordinate ATP: D493 and G530. N531 is a binding site for Mg(2+). Position 533 (S533) interacts with substrate.

The protein belongs to the FGAMS family. Monomer. Part of the FGAM synthase complex composed of 1 PurL, 1 PurQ and 2 PurS subunits.

Its subcellular location is the cytoplasm. The catalysed reaction is N(2)-formyl-N(1)-(5-phospho-beta-D-ribosyl)glycinamide + L-glutamine + ATP + H2O = 2-formamido-N(1)-(5-O-phospho-beta-D-ribosyl)acetamidine + L-glutamate + ADP + phosphate + H(+). Its pathway is purine metabolism; IMP biosynthesis via de novo pathway; 5-amino-1-(5-phospho-D-ribosyl)imidazole from N(2)-formyl-N(1)-(5-phospho-D-ribosyl)glycinamide: step 1/2. Its function is as follows. Part of the phosphoribosylformylglycinamidine synthase complex involved in the purines biosynthetic pathway. Catalyzes the ATP-dependent conversion of formylglycinamide ribonucleotide (FGAR) and glutamine to yield formylglycinamidine ribonucleotide (FGAM) and glutamate. The FGAM synthase complex is composed of three subunits. PurQ produces an ammonia molecule by converting glutamine to glutamate. PurL transfers the ammonia molecule to FGAR to form FGAM in an ATP-dependent manner. PurS interacts with PurQ and PurL and is thought to assist in the transfer of the ammonia molecule from PurQ to PurL. The protein is Phosphoribosylformylglycinamidine synthase subunit PurL of Rhodopseudomonas palustris (strain HaA2).